Reading from the N-terminus, the 501-residue chain is MKLELDMFFLYGSTILPECILIFSLLIILIIDLTFPKKDTIWLYFISLTSLLISIIILLFQYKTDPIISFLGSFQTDSFNRIFQSFIVFCSILCIPLSIEYIKCAKMAIPEFLIFILTATVGGMFLCGANDLVTIFVSLECLSLCSYLLCGYTKRDIRSNEAAIKYLLIGGTSSSILAYGFSWLYGLSGGETNIQKITNGLLNAETYNSSGTFIAFICILVGLAFKLSLVPFHQWTPDIYEGSPTPVVAFLSVTSKIAGLALATRILNILFSFSPNEWKIFLEILAILSMILGNLVAITQTSMKRMLAYSSISQIGYILIGLITGDLKGYTSMTIYVFFYIFMNLGTFACIILYSLRTGTDNIRDYAGLYIKDPLLSFSLTLCLLSLGGLPPLTGFFGKLYLFWCGWQSGFYLLVFIALITSVISLYYYLKIIKLILTKKNNEINPYIQAYIITSPTFFSKNPIEFVMIFCVLGSTFLGIIINPIFSFFQDSLSLSVFFIK.

Helical transmembrane passes span 15 to 35, 40 to 60, 82 to 102, 107 to 127, 132 to 152, 167 to 187, 212 to 232, 244 to 264, 278 to 298, 307 to 327, 333 to 353, 378 to 398, 410 to 430, and 466 to 486; these read ILPECILIFSLLIILIIDLTF, TIWLYFISLTSLLISIIILLF, IFQSFIVFCSILCIPLSIEYI, MAIPEFLIFILTATVGGMFLC, LVTIFVSLECLSLCSYLLCGY, LLIGGTSSSILAYGFSWLYGL, TFIAFICILVGLAFKLSLVPF, PTPVVAFLSVTSKIAGLALAT, WKIFLEILAILSMILGNLVAI, LAYSSISQIGYILIGLITGDL, MTIYVFFYIFMNLGTFACIIL, FSLTLCLLSLGGLPPLTGFFG, GFYLLVFIALITSVISLYYYL, and FVMIFCVLGSTFLGIIINPIF.

The protein belongs to the complex I subunit 2 family. In terms of assembly, NDH is composed of at least 16 different subunits, 5 of which are encoded in the nucleus.

The protein localises to the plastid. The protein resides in the chloroplast thylakoid membrane. It carries out the reaction a plastoquinone + NADH + (n+1) H(+)(in) = a plastoquinol + NAD(+) + n H(+)(out). The catalysed reaction is a plastoquinone + NADPH + (n+1) H(+)(in) = a plastoquinol + NADP(+) + n H(+)(out). In terms of biological role, NDH shuttles electrons from NAD(P)H:plastoquinone, via FMN and iron-sulfur (Fe-S) centers, to quinones in the photosynthetic chain and possibly in a chloroplast respiratory chain. The immediate electron acceptor for the enzyme in this species is believed to be plastoquinone. Couples the redox reaction to proton translocation, and thus conserves the redox energy in a proton gradient. The sequence is that of NAD(P)H-quinone oxidoreductase subunit 2, chloroplastic from Marchantia polymorpha (Common liverwort).